We begin with the raw amino-acid sequence, 256 residues long: Probable ribosomal RNA small subunit methyltransferase A (256 aa).

His8, Leu10, Gly34, Glu55, Asp83, and Asn98 together coordinate S-adenosyl-L-methionine.

It belongs to the class I-like SAM-binding methyltransferase superfamily. rRNA adenine N(6)-methyltransferase family. RsmA subfamily.

It localises to the cytoplasm. Functionally, specifically dimethylates two adjacent adenosines in the loop of a conserved hairpin near the 3'-end of 16S rRNA in the 30S particle. May play a critical role in biogenesis of 30S subunits. This is Probable ribosomal RNA small subunit methyltransferase A from Methanospirillum hungatei JF-1 (strain ATCC 27890 / DSM 864 / NBRC 100397 / JF-1).